The following is a 559-amino-acid chain: NXPE family member 3 (559 aa).

The first 30 residues, 1 to 30 (MWTNFFKLRLFCCLLAVLMVVVLVINVTQV), serve as a signal peptide directing secretion. Residues Asn-237, Asn-292, and Asn-346 are each glycosylated (N-linked (GlcNAc...) asparagine).

This sequence belongs to the NXPE family.

It localises to the secreted. In Homo sapiens (Human), this protein is NXPE family member 3 (NXPE3).